The chain runs to 310 residues: GTPase Era (310 aa).

Positions 17–184 (HSGFVALIGA…LDYLAQALPA (168 aa)) constitute an Era-type G domain. A G1 region spans residues 25-32 (GAPNAGKS). 25-32 (GAPNAGKS) is a binding site for GTP. Positions 51 to 55 (QTTRA) are G2. The interval 72 to 75 (DTPG) is G3. Residues 72 to 76 (DTPGI) and 134 to 137 (NKVD) contribute to the GTP site. The interval 134 to 137 (NKVD) is G4. The interval 163-165 (VSA) is G5. The KH type-2 domain maps to 215 to 292 (LHQELPYSSH…HLFLFVKVRE (78 aa)).

Belongs to the TRAFAC class TrmE-Era-EngA-EngB-Septin-like GTPase superfamily. Era GTPase family. As to quaternary structure, monomer.

Its subcellular location is the cytoplasm. It localises to the cell inner membrane. Functionally, an essential GTPase that binds both GDP and GTP, with rapid nucleotide exchange. Plays a role in 16S rRNA processing and 30S ribosomal subunit biogenesis and possibly also in cell cycle regulation and energy metabolism. The protein is GTPase Era of Mesorhizobium japonicum (strain LMG 29417 / CECT 9101 / MAFF 303099) (Mesorhizobium loti (strain MAFF 303099)).